We begin with the raw amino-acid sequence, 371 residues long: Putative transport protein YtvI (371 aa).

Transmembrane regions (helical) follow at residues 6–26, 30–50, 65–85, 168–188, 225–245, 256–276, 283–303, 312–332, and 334–354; these read ITIF…IAAA, FPLT…HPVV, VLGV…ILVA, FFAL…ATFF, GFIK…FIGL, IAFL…SVFV, SITG…VVLI, ILSK…FAGF, and LFGF…QAFI.

Belongs to the autoinducer-2 exporter (AI-2E) (TC 2.A.86) family.

It localises to the cell membrane. The chain is Putative transport protein YtvI (ytvI) from Bacillus subtilis (strain 168).